Here is a 309-residue protein sequence, read N- to C-terminus: MATELQCPDSMPCHNQQVNSASTPSPEQLRPGDPILDHAGGNRASRAKVTLLTGHTHCSLPAELDAGACVGSSLNSESNSGSGDSSSYDAPAGNSFLGDCELSRQIGAQLKLLPMNDQIRELQTIIRDKTASRGDFMFSADRLIRLVVEEGLNQLPYKECMVTTPTGYKYEGVKFEKGNCGVSIMRSGEAMEQGLRDCCRSIRIGKILIQSDEETQRAKVYYAKFPPDIYRRKVLLMYPILSTGNTVIEAVKVLIEHGVQPSVIILLSLFSTPHGAKSIIQEFPEITILTTEVHPVAPTHFGQKYFGTD.

The interval 1–41 is disordered; sequence MATELQCPDSMPCHNQQVNSASTPSPEQLRPGDPILDHAGG. Positions 13-26 are enriched in polar residues; the sequence is CHNQQVNSASTPSP. Ser25 is modified (phosphoserine). Residues Arg133, Arg142, and 176 to 179 each bind GTP; that span reads EKGN. Arg186 contributes to the 5-phospho-alpha-D-ribose 1-diphosphate binding site. Residues Arg203 and Arg232 each coordinate GTP. 238–246 contributes to the 5-phospho-alpha-D-ribose 1-diphosphate binding site; the sequence is YPILSTGNT. 299–301 is a binding site for uracil; that stretch reads THF.

Belongs to the UPRTase family.

It is found in the cytoplasm. The protein resides in the nucleus. In Macaca fascicularis (Crab-eating macaque), this protein is Uracil phosphoribosyltransferase homolog (UPRT).